The chain runs to 223 residues: Sigma non-opioid intracellular receptor 1 (223 aa).

The Lumenal segment spans residues 1–9 (MQWAVGRRW). Positions 2-8 (QWAVGRR) are targeting to endoplasmic reticulum-associated lipid droplets. Residues 10–30 (LWVALFLAAVAVLTQIVWLWL) traverse the membrane as a helical segment. Residues 31–223 (GTQNFVFQRE…LTTYLFGQDP (193 aa)) are Cytoplasmic-facing. Residues 99 to 106 (SLSEYVLL) form an important for ligand-binding region. The interval 177-223 (VIPSTLGFALADTVFSTQDFLTLFYTLRVYARALQLELTTYLFGQDP) is C-terminal hydrophobic region.

This sequence belongs to the ERG2 family. As to quaternary structure, homotrimer. Forms a ternary complex with ANK2 and ITPR3. The complex is disrupted by agonists. Interacts with KCNA4. Interacts with KCNA2; cocaine consumption leads to increased interaction. Interacts with RNF112 in an oxidative stress-regulated manner. As to expression, ubiquitously expressed with higher expression in liver, kidney and steroid-producing tissues such as placenta, ovary and adrenal gland.

The protein localises to the nucleus inner membrane. It localises to the nucleus outer membrane. Its subcellular location is the nucleus envelope. The protein resides in the cytoplasmic vesicle. It is found in the endoplasmic reticulum membrane. The protein localises to the membrane. It localises to the lipid droplet. Its subcellular location is the cell junction. The protein resides in the cell membrane. It is found in the cell projection. The protein localises to the growth cone. It localises to the postsynaptic density membrane. Functionally, functions in lipid transport from the endoplasmic reticulum and is involved in a wide array of cellular functions probably through regulation of the biogenesis of lipid microdomains at the plasma membrane. Involved in the regulation of different receptors it plays a role in BDNF signaling and EGF signaling. Also regulates ion channels like the potassium channel and could modulate neurotransmitter release. Plays a role in calcium signaling through modulation together with ANK2 of the ITP3R-dependent calcium efflux at the endoplasmic reticulum. Plays a role in several other cell functions including proliferation, survival and death. Originally identified for its ability to bind various psychoactive drugs it is involved in learning processes, memory and mood alteration. Necessary for proper mitochondrial axonal transport in motor neurons, in particular the retrograde movement of mitochondria. Plays a role in protecting cells against oxidative stress-induced cell death via its interaction with RNF112. The chain is Sigma non-opioid intracellular receptor 1 (SIGMAR1) from Cavia porcellus (Guinea pig).